Consider the following 226-residue polypeptide: UPF0319 protein YPO1442/y2728/YP_1333 (226 aa).

Residues 1-20 (MKLGLVAGMLAVCFSFSSVA) form the signal peptide.

This sequence belongs to the UPF0319 family.

The polypeptide is UPF0319 protein YPO1442/y2728/YP_1333 (Yersinia pestis).